The sequence spans 292 residues: Formamidopyrimidine-DNA glycosylase (292 aa).

Pro2 serves as the catalytic Schiff-base intermediate with DNA. The Proton donor role is filled by Glu3. Lys60 (proton donor; for beta-elimination activity) is an active-site residue. Positions 109, 128, and 173 each coordinate DNA. The FPG-type zinc finger occupies 258-292 (NVYRRTGRECRKCGNLIERQKITGRSTHWCPNCQK). Arg282 functions as the Proton donor; for delta-elimination activity in the catalytic mechanism.

It belongs to the FPG family. In terms of assembly, monomer. The cofactor is Zn(2+).

The catalysed reaction is Hydrolysis of DNA containing ring-opened 7-methylguanine residues, releasing 2,6-diamino-4-hydroxy-5-(N-methyl)formamidopyrimidine.. The enzyme catalyses 2'-deoxyribonucleotide-(2'-deoxyribose 5'-phosphate)-2'-deoxyribonucleotide-DNA = a 3'-end 2'-deoxyribonucleotide-(2,3-dehydro-2,3-deoxyribose 5'-phosphate)-DNA + a 5'-end 5'-phospho-2'-deoxyribonucleoside-DNA + H(+). In terms of biological role, involved in base excision repair of DNA damaged by oxidation or by mutagenic agents. Acts as a DNA glycosylase that recognizes and removes damaged bases. Has a preference for oxidized purines, such as 7,8-dihydro-8-oxoguanine (8-oxoG). Has AP (apurinic/apyrimidinic) lyase activity and introduces nicks in the DNA strand. Cleaves the DNA backbone by beta-delta elimination to generate a single-strand break at the site of the removed base with both 3'- and 5'-phosphates. The protein is Formamidopyrimidine-DNA glycosylase of Prochlorococcus marinus (strain MIT 9301).